Here is a 352-residue protein sequence, read N- to C-terminus: MARAAGLRALVGIEAAGRGRRVAASPSPGGTPAASRGLPGWPGFCGVGCGSSSSSSFAPPRMQARRAAGSAARTRSPSQSNGWITGGSASEDGRLSWDYSSFKGRRPSMEDRFSIKMTTINEQTVSLFGVFDGHGGSLAAEYLKEHLFENLVNHPELLRDTKLAISQTFLKTDADFLESVSSNPFRDDGSTAVTAILVGNHLYVGNVGDSRVVALKAGKAVPLSEDHKPNRKDEQKRIEDAGGIVVFDDTWRVNGLLAMSRAFGNRALKHYVKAEPDIQEKVVDESLEYLILATDGLWDVMRNEDAVSLLKAQDGPKAAAMKLTEVAHSRLTLDNITCIVLQFHHGKSTNSN.

Disordered stretches follow at residues 18-37 (RGRR…ASRG) and 53-87 (SSSS…ITGG). Composition is skewed to low complexity over residues 23 to 37 (AASP…ASRG) and 53 to 75 (SSSS…ARTR). Positions 96-343 (SWDYSSFKGR…DNITCIVLQF (248 aa)) constitute a PPM-type phosphatase domain. The Mn(2+) site is built by D132, G133, D295, and D334.

It belongs to the PP2C family. The cofactor is Mg(2+). Requires Mn(2+) as cofactor.

It carries out the reaction O-phospho-L-seryl-[protein] + H2O = L-seryl-[protein] + phosphate. The catalysed reaction is O-phospho-L-threonyl-[protein] + H2O = L-threonyl-[protein] + phosphate. The polypeptide is Probable protein phosphatase 2C 56 (Oryza sativa subsp. japonica (Rice)).